The following is a 907-amino-acid chain: Protein translocase subunit SecA (907 aa).

ATP is bound by residues Gln87, 105–109 (GEGKT), and Asp513. Residues 841–853 (EAQRRAQAEEAAR) show a composition bias toward basic and acidic residues. The disordered stretch occupies residues 841–907 (EAQRRAQAEE…KYKQCHGQIN (67 aa)). The segment covering 854-865 (RAQAQHASAQSQ) has biased composition (low complexity). Basic and acidic residues predominate over residues 872-887 (EGHHQPVVRDERKVGR). Cys891, Cys893, Cys902, and His903 together coordinate Zn(2+).

Belongs to the SecA family. In terms of assembly, monomer and homodimer. Part of the essential Sec protein translocation apparatus which comprises SecA, SecYEG and auxiliary proteins SecDF-YajC and YidC. Zn(2+) serves as cofactor.

It is found in the cell inner membrane. It localises to the cytoplasm. The catalysed reaction is ATP + H2O + cellular proteinSide 1 = ADP + phosphate + cellular proteinSide 2.. Its function is as follows. Part of the Sec protein translocase complex. Interacts with the SecYEG preprotein conducting channel. Has a central role in coupling the hydrolysis of ATP to the transfer of proteins into and across the cell membrane, serving both as a receptor for the preprotein-SecB complex and as an ATP-driven molecular motor driving the stepwise translocation of polypeptide chains across the membrane. The protein is Protein translocase subunit SecA of Vibrio vulnificus (strain CMCP6).